The primary structure comprises 431 residues: MKALLLSLLLLLPVVALAQAPTIEISGANFRPLPVAVPAPLTQNDGAKALVAPFDSAFSFDLTASGILQVLDRKGFTADAKEGMAAASINFSRWADVGAEALVKVSLAQDGGVLRGELRLFNVGTGREDLKVSKDAPADNASLLAHRLADALYRHFTREPSPFLSRITYVRKAGTNRDVYVADWDGGNARALTKGGINILPALSQDGSQVAFTTYRKNRPDIYVQSPGGEAKAVISGGQMATGAAFSPDGKRIAYSLAEGESAQVYVANADGSGARALTDTPYGLNTSPTWSPDGKRIAFVSNRGGSPQVYIMNADGTGVRRLTFQGNYNQTPDWSPRGDLIVFTARDERNAFDLFTVSVETGKVTRLTQDQGSNEEPAFSPNGRLIVFTSTRNGGSQLYVMTADGNNQLPLRTEKGTYQTPDWSPLPQAQ.

Positions 1–18 (MKALLLSLLLLLPVVALA) are cleaved as a signal peptide. Residues 410–431 (LPLRTEKGTYQTPDWSPLPQAQ) are disordered.

The protein belongs to the TolB family. As to quaternary structure, the Tol-Pal system is composed of five core proteins: the inner membrane proteins TolA, TolQ and TolR, the periplasmic protein TolB and the outer membrane protein Pal. They form a network linking the inner and outer membranes and the peptidoglycan layer.

Its subcellular location is the periplasm. Functionally, part of the Tol-Pal system, which plays a role in outer membrane invagination during cell division and is important for maintaining outer membrane integrity. The chain is Tol-Pal system protein TolB from Myxococcus xanthus.